Here is a 186-residue protein sequence, read N- to C-terminus: ADP-ribosylation factor-like protein 8B (186 aa).

Methionine 1 carries the post-translational modification N-acetylmethionine. Residues 1–19 (MLALISRLLDWFRSLFWKE) constitute an intramembrane region (note=Mediates targeting to membranes). Residues 29–35 (QYSGKTT), 71–75 (DIGGQ), and 130–133 (NKRD) each bind GTP. Lysine 141 participates in a covalent cross-link: Glycyl lysine isopeptide (Lys-Gly) (interchain with G-Cter in ubiquitin).

Belongs to the small GTPase superfamily. Arf family. As to quaternary structure, interacts with tubulin. Interacts with BORCS5; recruits ARL8B to lysosomes. Interacts with VPS41; the interaction mediates the recruitment of the HOPS complex to lysosomes. Interacts (GTP-bound form) with PLEKHM2 (via RUN domain); the interaction is required to recruit the motor protein kinesin-1 on lysosomes. Interacts (GTP-bound form) with PLEKHM1 (via RUN domain); the interaction is required for PLEKHM1 localization to lysosomes and for ARL8B function in delivery and degradation of endocytic and autophagic cargo in lysosomes. PLEKHM1 and PLEKHM2 compete for interaction with ARL8B. Interacts (GTP-bound form) with RUFY1; the interaction is required for RUFY1 endosomal location. When GTP-bound, interacts with RUFY3 and RUFY4, but not with RUFY1, nor RUFY2. Post-translationally, ubiquitinated at Lys-141 by RNF167, leading to its degradation. Ubiquitously expressed.

It localises to the late endosome membrane. It is found in the lysosome membrane. The protein localises to the cytoplasm. The protein resides in the cytoskeleton. Its subcellular location is the spindle. It localises to the cell projection. It is found in the axon. The protein localises to the synapse. The protein resides in the cytolytic granule membrane. Its subcellular location is the early endosome membrane. The catalysed reaction is GTP + H2O = GDP + phosphate + H(+). Small GTPase which cycles between active GTP-bound and inactive GDP-bound states. In its active state, binds to a variety of effector proteins playing a key role in the regulation of lysosomal positioning which is important for nutrient sensing, natural killer cell-mediated cytotoxicity and antigen presentation. Along with its effectors, orchestrates lysosomal transport and fusion. Localizes specifically to lysosomal membranes and mediates anterograde lysosomal motility by recruiting PLEKHM2, which in turn recruits the motor protein kinesin-1 on lysosomes. Required for lysosomal and cytolytic granule exocytosis. Critical factor involved in NK cell-mediated cytotoxicity. Drives the polarization of cytolytic granules and microtubule-organizing centers (MTOCs) toward the immune synapse between effector NK lymphocytes and target cells. In neurons, mediates the anterograde axonal long-range transport of presynaptic lysosome-related vesicles required for presynaptic biogenesis and synaptic function. Also acts as a regulator of endosome to lysosome trafficking pathways of special significance for host defense. Recruits RUFY1 onto early endosomes regulating endosomes to trans-Golgi network proteins retrieval. Regulates cargo trafficking to lysosomes by binding to PLEKHM1 and recruiting the HOPS subunit VPS41, resulting in functional assembly of the HOPS complex on lysosomal membranes. Plays an important role in cargo delivery to lysosomes for antigen presentation and microbial killing. Directs the intersection of CD1d with lipid antigens in lysosomes, and plays a role in intersecting phagosomes with lysosomes to generate phagolysosomes that kill microbes. Involved in the process of MHC II presentation. Regulates the delivery of antigens to lysosomes and the formation of MHC II-peptide complexes through the recruitment of the HOPS complex to lysosomes allowing the fusion of late endosomes to lysosomes. May play a role in chromosome segregation. In terms of biological role, (Microbial infection) During Mycobacterium tuberculosis (Mtb) infection, is required for plasma membrane repair by controlling the exocytosis of lysosomes in macrophages. ARL8B secretion pathway is crucial to control the type of cell death of the M.tuberculosis-infected macrophages, distinguishing avirulent from virulent Mtb induced necrotic cell death. Its function is as follows. (Microbial infection) During infection, coronaviruses such as SARS-CoV-2 and the chaperone HSPA5/GRP78 are probably co-released through ARL8B-dependent lysosomal exocytic pathway for unconventional egress. In Homo sapiens (Human), this protein is ADP-ribosylation factor-like protein 8B.